The primary structure comprises 311 residues: Ribosomal RNA small subunit methyltransferase H (311 aa).

S-adenosyl-L-methionine is bound by residues 39–41 (GGH), Asp-59, Phe-87, Asp-102, and His-109.

The protein belongs to the methyltransferase superfamily. RsmH family.

The protein resides in the cytoplasm. It carries out the reaction cytidine(1402) in 16S rRNA + S-adenosyl-L-methionine = N(4)-methylcytidine(1402) in 16S rRNA + S-adenosyl-L-homocysteine + H(+). Specifically methylates the N4 position of cytidine in position 1402 (C1402) of 16S rRNA. In Porphyromonas gingivalis (strain ATCC 33277 / DSM 20709 / CIP 103683 / JCM 12257 / NCTC 11834 / 2561), this protein is Ribosomal RNA small subunit methyltransferase H.